The chain runs to 133 residues: Fatty acid-binding protein, heart (133 aa).

Val-2 bears the N-acetylvaline mark. Residue Thr-8 is modified to Phosphothreonine. Position 20 is a phosphotyrosine; by Tyr-kinases (Tyr-20). Ser-23 bears the Phosphoserine mark. Thr-30 is modified (phosphothreonine). Phosphoserine is present on Ser-83. A (9Z)-octadecenoate-binding site is contributed by 127–129 (RTY). 127–129 (RTY) contacts hexadecanoate. 127 to 129 (RTY) contacts octadecanoate.

The protein belongs to the calycin superfamily. Fatty-acid binding protein (FABP) family.

It is found in the cytoplasm. In terms of biological role, FABPs are thought to play a role in the intracellular transport of long-chain fatty acids and their acyl-CoA esters. The protein is Fatty acid-binding protein, heart (FABP3) of Bos mutus grunniens (Wild yak).